The chain runs to 379 residues: Alcohol dehydrogenase 1 (379 aa).

Cys47, Thr49, His69, Cys99, Cys102, Cys105, Cys113, and Cys177 together coordinate Zn(2+). Residues Thr49 and His69 each coordinate an alcohol. Thr49 is an NAD(+) binding site. NAD(+)-binding positions include 202-207, Asp226, Arg231, Thr272, Val295, 295-297, Phe322, and Arg372; these read GLGAVG and VGV.

This sequence belongs to the zinc-containing alcohol dehydrogenase family. In terms of assembly, homodimer. Requires Zn(2+) as cofactor.

It is found in the cytoplasm. It carries out the reaction a primary alcohol + NAD(+) = an aldehyde + NADH + H(+). The enzyme catalyses a secondary alcohol + NAD(+) = a ketone + NADH + H(+). This Cenchrus americanus (Pearl millet) protein is Alcohol dehydrogenase 1 (ADH1).